We begin with the raw amino-acid sequence, 643 residues long: MTLLKTPLLDTIRDAADVRRLPQDKLAQLAAELRAETIDAVSVTGGHLGAGLGVVELTVALHHVFNTPHDRLIWDVGHQCYPHKILTGRRDRIRTLRQGGGLSGFTRRAESEYDPFGAAHSSTSISAGLGMAVARDLSGEERNVVCVIGDGAMSAGMAYEAMNNAGAMDSRLIVILNDNDMSIAPPTGAMSAYLARLISGQTYRSLREIGKQIAGHLPKFVERGAARAEEFARGFWTGGTLFEELGFYYVGPIDGHNLDHLLPVLKNVRDAKTGPILVHVVTQKGKGYAPAEASADKYHGVVKFDVVTGAQVKAKSNAPSYTRVFAESLISQARHDPKVVAITAAMPSGTGLDLFGQVYPERTFDVGIAEQHAVTFAAGLAAEGFKPFCALYSTFLQRAYDQVVHDVALQGLPVRFIIDRAGLVGADGATHAGAFDIAFLACLPGMTVMAPADEAELVHMMATMVAFDDGPSAVRFPRGEGVGVERPERGEVLPIGKGRIVHGTGEGDIALLSLGTRLAACLDAAERLEAAGFTVTVADARFAKPLDRELVLKLAAGHGALVTVEEGSVGGFGSHVLQLVTDEGLLDRGAVKVRAMVLPDIYIDQETQARQLAAAGLDADAIVAKVEGLLGKAKAGVSLHKAG.

Thiamine diphosphate is bound by residues H78 and 119 to 121 (AHS). D150 serves as a coordination point for Mg(2+). Thiamine diphosphate is bound by residues 151–152 (GA), N179, Y288, and E370. N179 contributes to the Mg(2+) binding site.

Belongs to the transketolase family. DXPS subfamily. In terms of assembly, homodimer. Requires Mg(2+) as cofactor. The cofactor is thiamine diphosphate.

It catalyses the reaction D-glyceraldehyde 3-phosphate + pyruvate + H(+) = 1-deoxy-D-xylulose 5-phosphate + CO2. Its pathway is metabolic intermediate biosynthesis; 1-deoxy-D-xylulose 5-phosphate biosynthesis; 1-deoxy-D-xylulose 5-phosphate from D-glyceraldehyde 3-phosphate and pyruvate: step 1/1. Catalyzes the acyloin condensation reaction between C atoms 2 and 3 of pyruvate and glyceraldehyde 3-phosphate to yield 1-deoxy-D-xylulose-5-phosphate (DXP). The protein is 1-deoxy-D-xylulose-5-phosphate synthase of Xanthobacter autotrophicus (strain ATCC BAA-1158 / Py2).